The following is a 110-amino-acid chain: Large ribosomal subunit protein uL22 (110 aa).

The protein belongs to the universal ribosomal protein uL22 family. Part of the 50S ribosomal subunit.

Functionally, this protein binds specifically to 23S rRNA; its binding is stimulated by other ribosomal proteins, e.g. L4, L17, and L20. It is important during the early stages of 50S assembly. It makes multiple contacts with different domains of the 23S rRNA in the assembled 50S subunit and ribosome. The globular domain of the protein is located near the polypeptide exit tunnel on the outside of the subunit, while an extended beta-hairpin is found that lines the wall of the exit tunnel in the center of the 70S ribosome. The chain is Large ribosomal subunit protein uL22 from Vesicomyosocius okutanii subsp. Calyptogena okutanii (strain HA).